A 151-amino-acid polypeptide reads, in one-letter code: Putative superoxide dismutase [Cu-Zn] (151 aa).

Positions 43, 45, and 60 each coordinate Cu cation. Cys-54 and Cys-144 are oxidised to a cystine. 4 residues coordinate Zn(2+): His-60, His-68, His-77, and Asp-80. His-118 contributes to the Cu cation binding site.

It belongs to the Cu-Zn superoxide dismutase family. Requires Cu cation as cofactor. Zn(2+) is required as a cofactor.

The enzyme catalyses 2 superoxide + 2 H(+) = H2O2 + O2. Nonessential for normal virus replication. Could be either non-functional or with a low activity. This Lepidoptera (butterflies and moths) protein is Putative superoxide dismutase [Cu-Zn] (SOD).